We begin with the raw amino-acid sequence, 593 residues long: DEAD-box ATP-dependent RNA helicase 18 (593 aa).

Residues 16-44 carry the Q motif motif; sequence FSDLEPPLSGDIIEALNQSDFEFCTPVQA. Residues 47–226 form the Helicase ATP-binding domain; that stretch reads IPLLCSYKDV…KAGLRNPVRV (180 aa). 60-67 provides a ligand contact to ATP; it reads AATGSGKT. The DEAD box motif lies at 174 to 177; sequence DEAD. The Helicase C-terminal domain maps to 264-411; sequence QLVDLLIKNS…ERKCSEDASD (148 aa). Over residues 506–524 the composition is skewed to basic and acidic residues; it reads QRQQNLQVRKEKRQEEKKE. Positions 506–561 are disordered; sequence QRQQNLQVRKEKRQEEKKEKGKRKRVDASASNDPKKASRKLTGKQRQTIQTAEDEE.

It belongs to the DEAD box helicase family. DDX55/SPB4 subfamily.

The enzyme catalyses ATP + H2O = ADP + phosphate + H(+). The polypeptide is DEAD-box ATP-dependent RNA helicase 18 (RH18) (Arabidopsis thaliana (Mouse-ear cress)).